Consider the following 422-residue polypeptide: uncharacterized protein (422 aa).

It belongs to the N(4)/N(6)-methyltransferase family.

The enzyme catalyses a 2'-deoxyadenosine in DNA + S-adenosyl-L-methionine = an N(6)-methyl-2'-deoxyadenosine in DNA + S-adenosyl-L-homocysteine + H(+). This is an uncharacterized protein from Mycoplasma pneumoniae (strain ATCC 29342 / M129 / Subtype 1) (Mycoplasmoides pneumoniae).